A 171-amino-acid chain; its full sequence is Cytochrome c oxidase subunit 5, mitochondrial (171 aa).

Residues 1–27 (MLRTPTVSALVRNVAVRAAKPTMAVRA) constitute a mitochondrion transit peptide. Topologically, residues 28 to 100 (ASTMPISNPT…ALPPPGEQKK (73 aa)) are mitochondrial matrix. Residues 101 to 123 (VLAYTVAGVFLSFVIFATMRAFA) traverse the membrane as a helical segment. Over 124 to 171 (KPPPATMTKEWQEATNEFLKAQKSDPLTGLTSEGYNGKGHVQSPSASA) the chain is Mitochondrial intermembrane. A disordered region spans residues 145–171 (QKSDPLTGLTSEGYNGKGHVQSPSASA).

It belongs to the cytochrome c oxidase IV family. As to quaternary structure, component of the cytochrome c oxidase (complex IV, CIV), a multisubunit enzyme composed of 11 subunits. The complex is composed of a catalytic core of 3 subunits Cox1, Cox2 and Cox3, encoded in the mitochondrial DNA, and 8 supernumerary subunits Cox4, Cox5a/Cox5, Cox6, Cox7, Cox8, Cox7a/Cox9, Cox6b/Cox12 and Cox6a/Cox13, which are encoded in the nuclear genome. The complex exists as a monomer or a dimer and forms respiratory supercomplexes (SCs) in the inner mitochondrial membrane with NADH-ubiquinone oxidoreductase (complex I, CI) and ubiquinol-cytochrome c oxidoreductase (cytochrome b-c1 complex, complex III, CIII), resulting in various different assemblies (supercomplexes I(1)IV(1), I(1)III(3)IV(2), III(2)IV(1) and III(2)IV(2) as well as larger supercomplexes of compositions like I(1)III(2)IV(5-6)).

The protein localises to the mitochondrion inner membrane. The protein operates within energy metabolism; oxidative phosphorylation. Component of the cytochrome c oxidase, the last enzyme in the mitochondrial electron transport chain which drives oxidative phosphorylation. The respiratory chain contains 3 multisubunit complexes succinate dehydrogenase (complex II, CII), ubiquinol-cytochrome c oxidoreductase (cytochrome b-c1 complex, complex III, CIII) and cytochrome c oxidase (complex IV, CIV), that cooperate to transfer electrons derived from NADH and succinate to molecular oxygen, creating an electrochemical gradient over the inner membrane that drives transmembrane transport and the ATP synthase. Cytochrome c oxidase is the component of the respiratory chain that catalyzes the reduction of oxygen to water. Electrons originating from reduced cytochrome c in the intermembrane space (IMS) are transferred via the dinuclear copper A center (CU(A)) of Cox2 and heme A of Cox1 to the active site in Cox1, a binuclear center (BNC) formed by heme A3 and copper B (CU(B)). The BNC reduces molecular oxygen to 2 water molecules using 4 electrons from cytochrome c in the IMS and 4 protons from the mitochondrial matrix. In Neurospora crassa (strain ATCC 24698 / 74-OR23-1A / CBS 708.71 / DSM 1257 / FGSC 987), this protein is Cytochrome c oxidase subunit 5, mitochondrial (cya-4).